Consider the following 282-residue polypeptide: Orotidine 5'-phosphate decarboxylase (282 aa).

The active-site Proton donor is Lys-95.

It belongs to the OMP decarboxylase family. Type 2 subfamily.

It catalyses the reaction orotidine 5'-phosphate + H(+) = UMP + CO2. The protein operates within pyrimidine metabolism; UMP biosynthesis via de novo pathway; UMP from orotate: step 2/2. In Polaromonas naphthalenivorans (strain CJ2), this protein is Orotidine 5'-phosphate decarboxylase.